Consider the following 133-residue polypeptide: Alcohol dehydrogenase, 15 kDa subunit (133 aa).

The first 24 residues, 1–24, serve as a signal peptide directing secretion; it reads MFRRIVPVLGLALGLGLASQAAMA. A disordered region spans residues 23-43; that stretch reads MAQEQSPPPPPAVQGTPGKDF. Gln-25 carries the post-translational modification Pyrrolidone carboxylic acid.

As to quaternary structure, the alcohol dehydrogenase multicomponent enzyme system is composed of a dehydrogenase subunit I (AdhA), a cytochrome c subunit II (AdhB) and a subunit III (AdhS).

The protein resides in the cell membrane. Its function is as follows. Part of the alcohol dehydrogenase multicomponent enzyme system which is involved in the production of acetic acid and in the ethanol oxidase respiratory chain. Does not play an obligatory role for the alcohol dehydrogenase (ADH) activity. The sequence is that of Alcohol dehydrogenase, 15 kDa subunit from Gluconobacter oxydans (strain 621H) (Gluconobacter suboxydans).